Consider the following 207-residue polypeptide: Nucleoplasmin-2 (207 aa).

The segment covering 1-15 (MSRHSTSSVTETTAK) has biased composition (polar residues). 2 disordered regions span residues 1 to 20 (MSRH…MLWG) and 121 to 207 (DLTW…VTKK). The segment covering 123–147 (TWEDDEEEEEEEEEEDEDEDADISL) has biased composition (acidic residues). The segment at 129–152 (EEEEEEEEEDEDEDADISLEEIPV) is acidic tract A2. Residues 165–180 (SIAKKKKVEKEEDETV) carry the Bipartite nuclear localization signal motif. Over residues 198-207 (PRAKKPVTKK) the composition is skewed to basic residues.

It belongs to the nucleoplasmin family. In terms of assembly, homopentamer, when bound to H2A-H2B dimers only. Homodecamer of two stacked pentamers, when bound to H2A-H2B dimers and H3-H4 tetramers simultaneously. In terms of tissue distribution, ovary specific.

The protein resides in the nucleus. In terms of biological role, core histones chaperone involved in chromatin reprogramming, specially during fertilization and early embryonic development. Probably involved in sperm DNA decondensation during fertilization. The sequence is that of Nucleoplasmin-2 (Npm2) from Mus musculus (Mouse).